The following is a 647-amino-acid chain: Neutral endopeptidase (647 aa).

A Peptidase M13 domain is found at 1–647 (MRRYLAVRGG…LDPEDRITIW (647 aa)). His496 is a Zn(2+) binding site. The active site involves Glu497. Residues His500 and Glu556 each coordinate Zn(2+). The Proton donor role is filled by Asp560.

Belongs to the peptidase M13 family. The cofactor is Zn(2+).

The chain is Neutral endopeptidase (pepO) from Lactobacillus helveticus (Lactobacillus suntoryeus).